Consider the following 767-residue polypeptide: MGPLQREGRPALGDANVAPGSSPGGVWHQPQPPKDSAFHPMGWSLPKEKGLILCLWNKFCRWFHRRESWAQSRDEQNLLQQKRIWESPLLLAAKENNVQALIKLLKFEGCEVHQKGAMGETALHIAALYDNLEAAMVLMEAAPELVFEPMTSELYEGQTALHIAVINQNVNLVRALLARGASVSARATGSVFHYRPHNLIYYGEHPLSFAACVGSEEIVRLLIEHGADIRAQDSLGNTVLHILILQPNKTFACQMYNLLLSYDGGDHLKSLELVPNNQGLTPFKLAGVEGNIVMFQHLMQKRKHIQWTYGPLTSTLYDLTEIDSSGDDQSLLELIVTTKKREARQILDQTPVKELVSLKWKRYGRPYFCVLGAIYVLYIICFTMCCVYRPLKPRITNRTNPRDNTLLQQKLLQEAYVTPKDDLRLVGELVSIVGAVIILLVEIPDIFRLGVTRFFGQTILGGPFHVIIVTYAFMVLVTMVMRLTNSDGEVVPMSFALVLGWCNVMYFARGFQMLGPFTIMIQKMIFGDLMRFCWLMAVVILGFASAFYIIFQTEDPDELGHFYDYPMALFSTFELFLTIIDGPANYDVDLPFMYSITYAAFAIIATLLMLNLLIAMMGDTHWRVAHERDELWRAQVVATTVMLERKLPRCLWPRSGICGREYGLGDRWFLRVEDRQDLNRQRIRRYAQAFQQQDDLYSEDLEKDSGEKLEMARPFGAYLSFPTPSVSRSTSRSSTNWDRLRQGALRKDLQGIINRGLEDGEGWEYQI.

The segment at 1-33 (MGPLQREGRPALGDANVAPGSSPGGVWHQPQPP) is disordered. The Cytoplasmic segment spans residues 1 to 366 (MGPLQREGRP…SLKWKRYGRP (366 aa)). ANK repeat units lie at residues 84–114 (IWES…EVHQ), 118–147 (MGET…ELVF), and 156–185 (EGQT…SVSA). The interaction with calmodulin stretch occupies residues 133–143 (EAAMVLMEAAP). Phosphotyrosine; by SRC is present on residues Y201 and Y202. 3 ANK repeats span residues 202-231 (YGEH…DIRA), 235-276 (LGNT…LVPN), and 278-307 (QGLT…HIQW). A helical transmembrane segment spans residues 367–387 (YFCVLGAIYVLYIICFTMCCV). At 388–424 (YRPLKPRITNRTNPRDNTLLQQKLLQEAYVTPKDDLR) the chain is on the extracellular side. N397 carries an N-linked (GlcNAc...) asparagine glycan. A helical transmembrane segment spans residues 425–447 (LVGELVSIVGAVIILLVEIPDIF). Residues 448-462 (RLGVTRFFGQTILGG) lie on the Cytoplasmic side of the membrane. A helical membrane pass occupies residues 463–482 (PFHVIIVTYAFMVLVTMVMR). At 483 to 488 (LTNSDG) the chain is on the extracellular side. The helical transmembrane segment at 489–508 (EVVPMSFALVLGWCNVMYFA) threads the bilayer. Topologically, residues 509–528 (RGFQMLGPFTIMIQKMIFGD) are cytoplasmic. Residues 529–551 (LMRFCWLMAVVILGFASAFYIIF) form a helical membrane-spanning segment. Residues 552–564 (QTEDPDELGHFYD) lie on the Extracellular side of the membrane. The pore-forming intramembrane region spans 565-584 (YPMALFSTFELFLTIIDGPA). Residues 580–584 (IDGPA) carry the Selectivity filter motif. A Ca(2+)-binding site is contributed by D581. Residues 585 to 595 (NYDVDLPFMYS) lie on the Extracellular side of the membrane. A helical transmembrane segment spans residues 596 to 616 (ITYAAFAIIATLLMLNLLIAM). The Cytoplasmic segment spans residues 617–767 (MGDTHWRVAH…EDGEGWEYQI (151 aa)). An interaction with S100A10 region spans residues 637–641 (VATTV). The tract at residues 689–707 (AFQQQDDLYSEDLEKDSGE) is interaction with calmodulin.

This sequence belongs to the transient receptor (TC 1.A.4) family. TrpV subfamily. TRPV6 sub-subfamily. In terms of assembly, homotetramer. Probably also forms heterotetramers with TRPV5. Interacts with TRPV5. Interacts with S100A10 and probably with the ANAX2-S100A10 heterotetramer. The interaction with S100A10 is required for the trafficking to the plasma membrane. Interacts with calmodulin. Interacts with BSPRY. Interacts with TCAF1 and TCAF2. In terms of processing, glycosylated. Phosphorylation at Tyr-201 and Tyr-202 by SRC leads to an increased calcium influx through the channel. Probably dephosphorylated at these sites by PTPN1. In terms of tissue distribution, expressed in duodenum, proximal jejunum, cecum, and colon.

The protein localises to the cell membrane. The enzyme catalyses Ca(2+)(in) = Ca(2+)(out). Calcium selective cation channel that mediates Ca(2+) uptake in various tissues, including the intestine. Important for normal Ca(2+) ion homeostasis in the body, including bone and skin. The channel is activated by low internal calcium level, probably including intracellular calcium store depletion, and the current exhibits an inward rectification. Inactivation includes both a rapid Ca(2+)-dependent and a slower Ca(2+)-calmodulin-dependent mechanism; the latter may be regulated by phosphorylation. In vitro, is slowly inhibited by Mg(2+) in a voltage-independent manner. Heteromeric assembly with TRPV5 seems to modify channel properties. TRPV5-TRPV6 heteromultimeric concatemers exhibit voltage-dependent gating. The chain is Transient receptor potential cation channel subfamily V member 6 (Trpv6) from Rattus norvegicus (Rat).